Here is a 356-residue protein sequence, read N- to C-terminus: GTPase Obg (356 aa).

The Obg domain occupies Met1–Ile159. The OBG-type G domain occupies Ala160–Ser327. GTP-binding positions include Gly166–Ser173, Phe191–His195, Asp212–Gly215, Asn279–Asp282, and Ser308–Val310. Positions 173 and 193 each coordinate Mg(2+). Positions Ala329–Asn356 are disordered.

The protein belongs to the TRAFAC class OBG-HflX-like GTPase superfamily. OBG GTPase family. Monomer. Mg(2+) is required as a cofactor.

It is found in the cytoplasm. Its function is as follows. An essential GTPase which binds GTP, GDP and possibly (p)ppGpp with moderate affinity, with high nucleotide exchange rates and a fairly low GTP hydrolysis rate. Plays a role in control of the cell cycle, stress response, ribosome biogenesis and in those bacteria that undergo differentiation, in morphogenesis control. This chain is GTPase Obg, found in Afipia carboxidovorans (strain ATCC 49405 / DSM 1227 / KCTC 32145 / OM5) (Oligotropha carboxidovorans).